Here is a 115-residue protein sequence, read N- to C-terminus: NADH-ubiquinone oxidoreductase chain 3 (115 aa).

3 consecutive transmembrane segments (helical) span residues 4-24 (LMVL…AFWL), 55-75 (FFLV…LLPL), and 84-104 (INIM…GLAY).

It belongs to the complex I subunit 3 family. In terms of assembly, core subunit of respiratory chain NADH dehydrogenase (Complex I) which is composed of 45 different subunits. Interacts with TMEM186. Interacts with TMEM242.

It is found in the mitochondrion membrane. It carries out the reaction a ubiquinone + NADH + 5 H(+)(in) = a ubiquinol + NAD(+) + 4 H(+)(out). Functionally, core subunit of the mitochondrial membrane respiratory chain NADH dehydrogenase (Complex I) that is believed to belong to the minimal assembly required for catalysis. Complex I functions in the transfer of electrons from NADH to the respiratory chain. The immediate electron acceptor for the enzyme is believed to be ubiquinone. The protein is NADH-ubiquinone oxidoreductase chain 3 of Onychomys leucogaster (Northern grasshopper mouse).